A 186-amino-acid chain; its full sequence is Phosphoprotein p30 (186 aa).

This sequence belongs to the asfivirus phosphoprotein p30 family. As to quaternary structure, oligomer. Interacts with host HNRNPK.

The protein localises to the host cytoplasm. It is found in the host nucleus. Its subcellular location is the virion. Modifies the subcellular distribution of heterogeneous nuclear ribonucleoprotein K (HNRNPK) and may contribute to modulate HNRNPK functions related to processing and export of mRNAs during ASFV infection. Necessary for virus internalization. This is Phosphoprotein p30 from Ornithodoros (relapsing fever ticks).